The sequence spans 143 residues: D-aminoacyl-tRNA deacylase (143 aa).

A Gly-cisPro motif, important for rejection of L-amino acids motif is present at residues 135–136; it reads GP.

Belongs to the DTD family. In terms of assembly, homodimer.

It localises to the cytoplasm. The catalysed reaction is glycyl-tRNA(Ala) + H2O = tRNA(Ala) + glycine + H(+). It carries out the reaction a D-aminoacyl-tRNA + H2O = a tRNA + a D-alpha-amino acid + H(+). An aminoacyl-tRNA editing enzyme that deacylates mischarged D-aminoacyl-tRNAs. Also deacylates mischarged glycyl-tRNA(Ala), protecting cells against glycine mischarging by AlaRS. Acts via tRNA-based rather than protein-based catalysis; rejects L-amino acids rather than detecting D-amino acids in the active site. By recycling D-aminoacyl-tRNA to D-amino acids and free tRNA molecules, this enzyme counteracts the toxicity associated with the formation of D-aminoacyl-tRNA entities in vivo and helps enforce protein L-homochirality. The chain is D-aminoacyl-tRNA deacylase from Mycobacterium marinum (strain ATCC BAA-535 / M).